We begin with the raw amino-acid sequence, 258 residues long: Axonemal dynein light intermediate polypeptide 1 (258 aa).

Disordered stretches follow at residues 1–60 and 202–231; these read MIPP…CVPD and DLERQVNEQKAKCEATEKRESERRQVEEKK. A coiled-coil region spans residues 176 to 255; sequence MRKALQAEQG…LKAQLEGIIA (80 aa).

The protein belongs to the inner dynein arm light chain family. As to quaternary structure, interacts with CFAP45. Interacts with DYNC1H1. As to expression, predominantly expressed in the testis, also detected at lower levels in several tissues expressing cilia. Strongly expressed in elongating spermatid cells (at protein level).

It is found in the cell projection. The protein resides in the cilium. It localises to the flagellum. Its subcellular location is the dynein axonemal particle. The protein localises to the cytoplasm. Its function is as follows. Involved in sperm flagellum assembly. The sequence is that of Axonemal dynein light intermediate polypeptide 1 from Mus musculus (Mouse).